The primary structure comprises 341 residues: L-threonine 3-dehydrogenase (341 aa).

Cys38 contacts Zn(2+). Residues Thr40 and His43 each act as charge relay system in the active site. Zn(2+) contacts are provided by His63, Glu64, Cys93, Cys96, Cys99, and Cys107. NAD(+) contacts are provided by residues Ile175, Asp195, Arg200, 262-264, and 286-287; these read LGI and IY.

It belongs to the zinc-containing alcohol dehydrogenase family. As to quaternary structure, homotetramer. Zn(2+) serves as cofactor.

It is found in the cytoplasm. The enzyme catalyses L-threonine + NAD(+) = (2S)-2-amino-3-oxobutanoate + NADH + H(+). Its pathway is amino-acid degradation; L-threonine degradation via oxydo-reductase pathway; glycine from L-threonine: step 1/2. Its function is as follows. Catalyzes the NAD(+)-dependent oxidation of L-threonine to 2-amino-3-ketobutyrate. This chain is L-threonine 3-dehydrogenase, found in Idiomarina loihiensis (strain ATCC BAA-735 / DSM 15497 / L2-TR).